The primary structure comprises 525 residues: Probable lipid II flippase MurJ (525 aa).

The next 14 helical transmembrane spans lie at 10–30 (LLKSGIIVSAMTLISRVLGLV), 32–52 (DVVVANLMGAGASADVFFFAN), 100–120 (VLVTIVTLIGVLGSGAVTALF), 140–160 (LASLLLKITFPYLWFITFVAL), 171–191 (FAVSSFTPVFLNVMMILCAWY), 203–223 (LAIGVFLGGLVQFLFQLPFLI), 247–267 (MIPALFGVSVSQINLLFDSFV), 285–305 (LLEFPLGLFGIAIATVILPAL), 330–350 (FLGIPAMLGLMVLAKPMLMVL), 368–388 (LLAYSSGLLSFMLIKVLAPGY), 402–422 (IIAMVSNIVLNAIFAWFYGYV), 423–443 (GLAVATSMSAFLNMALLYRGL), 455–475 (TVWFVARLAMAGAVMTGALLW), and 495–515 (LTGLIGLGVASYLAILLLLGV).

The protein belongs to the MurJ/MviN family.

The protein localises to the cell inner membrane. It participates in cell wall biogenesis; peptidoglycan biosynthesis. Its function is as follows. Involved in peptidoglycan biosynthesis. Transports lipid-linked peptidoglycan precursors from the inner to the outer leaflet of the cytoplasmic membrane. The protein is Probable lipid II flippase MurJ of Vibrio cholerae serotype O1 (strain ATCC 39315 / El Tor Inaba N16961).